We begin with the raw amino-acid sequence, 123 residues long: Large ribosomal subunit protein eL8 (123 aa).

This sequence belongs to the eukaryotic ribosomal protein eL8 family. In terms of assembly, part of the 50S ribosomal subunit. Probably part of the RNase P complex.

The protein localises to the cytoplasm. Functionally, multifunctional RNA-binding protein that recognizes the K-turn motif in ribosomal RNA, the RNA component of RNase P, box H/ACA, box C/D and box C'/D' sRNAs. The protein is Large ribosomal subunit protein eL8 of Thermococcus gammatolerans (strain DSM 15229 / JCM 11827 / EJ3).